A 217-amino-acid polypeptide reads, in one-letter code: LexA repressor (217 aa).

Positions 28–48 (RAEIAAEFGFSSPNAAEEHLR) form a DNA-binding region, H-T-H motif. Catalysis depends on for autocatalytic cleavage activity residues serine 136 and lysine 173.

Belongs to the peptidase S24 family. In terms of assembly, homodimer.

The enzyme catalyses Hydrolysis of Ala-|-Gly bond in repressor LexA.. Functionally, represses a number of genes involved in the response to DNA damage (SOS response), including recA and lexA. In the presence of single-stranded DNA, RecA interacts with LexA causing an autocatalytic cleavage which disrupts the DNA-binding part of LexA, leading to derepression of the SOS regulon and eventually DNA repair. The sequence is that of LexA repressor from Cupriavidus taiwanensis (strain DSM 17343 / BCRC 17206 / CCUG 44338 / CIP 107171 / LMG 19424 / R1) (Ralstonia taiwanensis (strain LMG 19424)).